Reading from the N-terminus, the 248-residue chain is Probable phosphatase VFMJ11_A0899 (248 aa).

Positions 8, 10, 16, 41, 74, 101, 131, 193, and 195 each coordinate Zn(2+).

Belongs to the PHP family. Requires Zn(2+) as cofactor.

This chain is Probable phosphatase VFMJ11_A0899, found in Aliivibrio fischeri (strain MJ11) (Vibrio fischeri).